The chain runs to 237 residues: Uridylate kinase (237 aa).

13-16 (KLSG) is a binding site for ATP. Glycine 53 contacts UMP. ATP contacts are provided by glycine 54 and arginine 58. UMP contacts are provided by residues aspartate 73 and 134–141 (AGLPYFST). Residues asparagine 162, tyrosine 168, and aspartate 171 each coordinate ATP.

It belongs to the UMP kinase family. Homohexamer.

It is found in the cytoplasm. It carries out the reaction UMP + ATP = UDP + ADP. The protein operates within pyrimidine metabolism; CTP biosynthesis via de novo pathway; UDP from UMP (UMPK route): step 1/1. Its activity is regulated as follows. Inhibited by UTP. In terms of biological role, catalyzes the reversible phosphorylation of UMP to UDP. The chain is Uridylate kinase from Leifsonia xyli subsp. xyli (strain CTCB07).